A 226-amino-acid polypeptide reads, in one-letter code: Lipid phosphate phosphatase gamma (226 aa).

M1 carries the post-translational modification N-acetylmethionine. The next 5 membrane-spanning stretches (helical) occupy residues 24-44 (LGHF…GGFV), 52-72 (ELQG…NEFI), 102-122 (FMFF…GFWF), 128-148 (WIMN…RVYL), and 152-174 (TVAQ…FWVV).

Belongs to the PA-phosphatase related phosphoesterase family. In terms of tissue distribution, expressed in root tips, root branch points, vascular tissue of cotyledons and leaves, pistil, anthers and filaments.

It localises to the plastid. The protein resides in the chloroplast inner membrane. With respect to regulation, inhibited by Mg(2+). In terms of biological role, exhibits phosphatidate phosphatase (PAP) activity in vitro. May play a primary role as PAP in plastids. The chain is Lipid phosphate phosphatase gamma (LPPG) from Arabidopsis thaliana (Mouse-ear cress).